Consider the following 345-residue polypeptide: Transcription factor 19 (345 aa).

Residues 31 to 88 (YRLGHRADLCDVALRPQQEPGLISGIHAELHAEPRGDDWRVSLEDHSSQGTLVNNVRL) enclose the FHA domain. At serine 78 the chain carries Phosphoserine. The disordered stretch occupies residues 190-227 (LTFSPSWGGPKSLPVPAPPGEMGTTPSAPPQRNRRKSV). Residues 293-342 (AAPCCCLPQEETVAWVQCDGCDVWFHVACVGCSIQAAREADFRCPGCRAG) form a PHD-type zinc finger. 8 residues coordinate Zn(2+): cysteine 296, cysteine 298, cysteine 310, cysteine 313, histidine 318, cysteine 321, cysteine 336, and cysteine 339.

The protein localises to the nucleus. Its function is as follows. Potential transcription factor that may play a role in the regulation of genes involved in cell cycle G1/S transition. May bind to regulatory elements of genes, including the promoter of the transcription factor FOXO1. The sequence is that of Transcription factor 19 (TCF19) from Homo sapiens (Human).